Consider the following 1680-residue polypeptide: Alpha-protein kinase 3 (1680 aa).

A disordered region spans residues 1 to 37; the sequence is MGSRRAAGRGWGLGGRAGAGGDSEDDGPVWTPGPASR. Residues 9–21 show a composition bias toward gly residues; the sequence is RGWGLGGRAGAGG. An Ig-like 1 domain is found at 77-173; the sequence is PLFETTLKSR…SGVLEVGTMT (97 aa). S229 carries the post-translational modification Phosphoserine. Disordered regions lie at residues 237 to 288, 302 to 759, 785 to 950, 1078 to 1128, and 1147 to 1244; these read STPV…NGED, ELGP…CPRE, SEEA…GTRS, EGSA…LTGL, and PKVR…QRKA. A compositionally biased stretch (basic and acidic residues) spans 320–337; it reads KDEESKPGEQKLELEKAE. Positions 339–353 are enriched in polar residues; the sequence is SQCSSENVVPSTDKP. Pro residues predominate over residues 402-426; the sequence is APAPAPVPAPALAPAPVPVPAPTPV. Positions 514-532 are enriched in low complexity; it reads ESTTTSLSSQTSESMAQSL. 2 stretches are compositionally biased toward polar residues: residues 557-566 and 731-744; these read SPLQGQTSHK and ETQS…SLSS. Residues 785–796 are compositionally biased toward basic and acidic residues; the sequence is SEEAAFRSHEDG. A compositionally biased stretch (polar residues) spans 917-932; that stretch reads SPTQSHPPEAMATSSE. Composition is skewed to basic and acidic residues over residues 1087–1111 and 1151–1165; these read ERTS…ESRT and AGSD…ERES. S1199 is modified (phosphoserine). Basic and acidic residues predominate over residues 1231–1244; it reads DEGKQEALAKQRKA. The region spanning 1251–1339 is the Ig-like 2 domain; sequence PQVIRKIRVE…GSASTDFCLS (89 aa). C1273 and C1323 are joined by a disulfide. The 234-residue stretch at 1367–1600 folds into the Alpha-type protein kinase domain; the sequence is KGLADSGCWG…YCDMLGLKPL (234 aa). The disordered stretch occupies residues 1603–1680; sequence PEAAHPQAKA…DGSSKAQSMR (78 aa). Composition is skewed to polar residues over residues 1639 to 1660 and 1671 to 1680; these read PQGS…QAAT and DGSSKAQSMR.

The protein belongs to the protein kinase superfamily. Alpha-type protein kinase family. ALPK subfamily. In terms of tissue distribution, expressed in the heart and skeletal muscle of adult mice.

It localises to the nucleus. The enzyme catalyses L-seryl-[protein] + ATP = O-phospho-L-seryl-[protein] + ADP + H(+). It carries out the reaction L-threonyl-[protein] + ATP = O-phospho-L-threonyl-[protein] + ADP + H(+). In terms of biological role, involved in cardiomyocyte differentiation. In Mus musculus (Mouse), this protein is Alpha-protein kinase 3.